We begin with the raw amino-acid sequence, 229 residues long: Dolichyldiphosphatase 1 (229 aa).

Transmembrane regions (helical) follow at residues 27 to 47 (LFNA…ITLI), 94 to 114 (MPSS…LFYL), 120 to 140 (FGSK…AAGV), and 156 to 176 (FCGS…IEYI).

It belongs to the dolichyldiphosphatase family.

The protein resides in the endoplasmic reticulum membrane. It catalyses the reaction a di-trans,poly-cis-dolichyl diphosphate + H2O = a di-trans,poly-cis-dolichyl phosphate + phosphate + H(+). Its pathway is protein modification; protein glycosylation. In terms of biological role, required for efficient N-glycosylation. Necessary for maintaining optimal levels of dolichol-linked oligosaccharides. Hydrolyzes dolichyl pyrophosphate at a very high rate and dolichyl monophosphate at a much lower rate. Does not act on phosphatidate. This is Dolichyldiphosphatase 1 (dolpp1) from Dictyostelium discoideum (Social amoeba).